The sequence spans 279 residues: ATP synthase gamma chain (279 aa).

Belongs to the ATPase gamma chain family. F-type ATPases have 2 components, CF(1) - the catalytic core - and CF(0) - the membrane proton channel. CF(1) has five subunits: alpha(3), beta(3), gamma(1), delta(1), epsilon(1). CF(0) has three main subunits: a, b and c.

It is found in the cell membrane. Produces ATP from ADP in the presence of a proton gradient across the membrane. The gamma chain is believed to be important in regulating ATPase activity and the flow of protons through the CF(0) complex. This Mycoplasma genitalium (strain ATCC 33530 / DSM 19775 / NCTC 10195 / G37) (Mycoplasmoides genitalium) protein is ATP synthase gamma chain.